Consider the following 669-residue polypeptide: MKRFAAVSLAALMLLTVFASAASAADVIEIRGPVYNGSDINDIIDTYGENNALTIDATKFAAFYYDIDDNVTTETLSILAVPGTEGNVIGEGGIVYETTIQQVDYEFYRPAAGWSNYSLIGFFAEKYIPINPDKADKLAKLVLDSDDKYTIRTGEQLDLGEGYSIEAKQVDVDGEKVWLEFTKDGEFVDDEIISVVSGSDNTWEVELDDIQDEDDVVVLRVHVNQVFQGAVDSIAQIEGLWLIDYTNAMKIESDDEFGNLDNVKINGDTLTITNEDTFTLTRDDEEEIAEGLFFKTADDTRALRFYAMKQITEPGTYEIRGEVAEGDFSWDATNFAGFFYDVNDDVSTESLTVTGLNGGNVIPEGGLVYETTIQMVDYEYSKPSVGWDQFPVLGFFAEEYIPINADKADKLAKLVLDSDDKYTIRTGEQLDLGEGYAIEAKQVDVDGEKVWLEFTKDGEFVDDEIISVVSGSDNTWEVELDDIQDEDDVVVLRVHVNQVFQGAVDSIAQIEGIWLIDYANAMKIESDDEFGDLDNVKINGATLTITNEDTFTLTRDDEVEIGQGMFFKVADTAASDLRYYPFVEKTIDGEVVDDDEDDDNVTEPVDNDTEVEEPTEEPTEGPTEEPTEGPTTEEPTEEPTEADGTTPGFGVVLGLVGLLAVVYLVRRNN.

The signal sequence occupies residues 1-24 (MKRFAAVSLAALMLLTVFASAASA). N-linked (GlcNAc...) asparagine glycans are attached at residues N36, N70, N116, N600, and N607. Positions 588–648 (DGEVVDDDED…PTEADGTTPG (61 aa)) are disordered. Positions 590–627 (EVVDDDEDDDNVTEPVDNDTEVEEPTEEPTEGPTEEPT) are enriched in acidic residues. Residues 645–665 (TTPGFGVVLGLVGLLAVVYLV) form a helical membrane-spanning segment.

It belongs to the Methanosarcinales S-layer protein family. In terms of processing, glycosylated.

The protein resides in the secreted. It localises to the cell wall. It is found in the S-layer. The protein localises to the cell membrane. S-layer protein. The S-layer is a paracrystalline mono-layered assembly of proteins which coat the surface of the cell. This is Major S-layer protein from Methanosarcina mazei (strain ATCC BAA-159 / DSM 3647 / Goe1 / Go1 / JCM 11833 / OCM 88) (Methanosarcina frisia).